A 215-amino-acid polypeptide reads, in one-letter code: UPF0056 membrane protein bbp_248 (215 aa).

The next 6 membrane-spanning stretches (helical) occupy residues 10–32 (IYISFFFSLFALVNPIGMIPIFT), 52–74 (FSVAIILSISLIFGSFILNLFGI), 78–100 (SFRISGGILVMIIAISMINGNFI), 119–141 (ISIVPLAMPLIAGPGAISSTIVW), 151–169 (IFGCMVTIMLFSCFCWTLF), and 190–207 (IMGLLLMSLGIEFILAGL).

This sequence belongs to the UPF0056 (MarC) family.

It is found in the cell membrane. The protein is UPF0056 membrane protein bbp_248 of Buchnera aphidicola subsp. Baizongia pistaciae (strain Bp).